Here is an 842-residue protein sequence, read N- to C-terminus: Circularly permutated Ras protein 1 (842 aa).

GTP-binding positions include 62–66 (DTAGQ), 121–124 (NKVD), and 181–188 (GGGGVGKS). The segment at 253 to 274 (SGKDKQPSPQQAASPSTIDRTG) is disordered. The span at 259 to 274 (PSPQQAASPSTIDRTG) shows a compositional bias: polar residues. One can recognise a VWFA domain in the interval 377–627 (IIIYCIDVSG…TQNPMIATDV (251 aa)).

The protein belongs to the small GTPase superfamily. CpRas family.

The protein is Circularly permutated Ras protein 1 (cpras1) of Dictyostelium discoideum (Social amoeba).